Here is a 619-residue protein sequence, read N- to C-terminus: Dihydroxy-acid dehydratase 1 (619 aa).

Aspartate 81 lines the Mg(2+) pocket. Cysteine 122 lines the [2Fe-2S] cluster pocket. Residues aspartate 123 and lysine 124 each coordinate Mg(2+). At lysine 124 the chain carries N6-carboxylysine. Position 201 (cysteine 201) interacts with [2Fe-2S] cluster. Glutamate 496 contacts Mg(2+). The active-site Proton acceptor is serine 522.

Belongs to the IlvD/Edd family. Homodimer. [2Fe-2S] cluster serves as cofactor. It depends on Mg(2+) as a cofactor.

The enzyme catalyses (2R)-2,3-dihydroxy-3-methylbutanoate = 3-methyl-2-oxobutanoate + H2O. It carries out the reaction (2R,3R)-2,3-dihydroxy-3-methylpentanoate = (S)-3-methyl-2-oxopentanoate + H2O. It functions in the pathway amino-acid biosynthesis; L-isoleucine biosynthesis; L-isoleucine from 2-oxobutanoate: step 3/4. Its pathway is amino-acid biosynthesis; L-valine biosynthesis; L-valine from pyruvate: step 3/4. Functions in the biosynthesis of branched-chain amino acids. Catalyzes the dehydration of (2R,3R)-2,3-dihydroxy-3-methylpentanoate (2,3-dihydroxy-3-methylvalerate) into 2-oxo-3-methylpentanoate (2-oxo-3-methylvalerate) and of (2R)-2,3-dihydroxy-3-methylbutanoate (2,3-dihydroxyisovalerate) into 2-oxo-3-methylbutanoate (2-oxoisovalerate), the penultimate precursor to L-isoleucine and L-valine, respectively. The protein is Dihydroxy-acid dehydratase 1 of Burkholderia lata (strain ATCC 17760 / DSM 23089 / LMG 22485 / NCIMB 9086 / R18194 / 383).